Here is a 494-residue protein sequence, read N- to C-terminus: UPF0371 protein SPG_0310 (494 aa).

This sequence belongs to the UPF0371 family.

In Streptococcus pneumoniae serotype 19F (strain G54), this protein is UPF0371 protein SPG_0310.